The sequence spans 313 residues: D-alanine--D-alanine ligase (313 aa).

In terms of domain architecture, ATP-grasp spans 104 to 304; the sequence is KQALVPHGIP…YSDLVEAIIA (201 aa). 130–187 lines the ATP pocket; sequence PLPRPYVLKPVNEGSSVGVAIVTAEGNYGSPISAASKGPWQEFDQLLAEPFIRGRELT. Mg(2+) is bound by residues aspartate 255, glutamate 271, and asparagine 273.

The protein belongs to the D-alanine--D-alanine ligase family. Requires Mg(2+) as cofactor. Mn(2+) serves as cofactor.

Its subcellular location is the cytoplasm. It carries out the reaction 2 D-alanine + ATP = D-alanyl-D-alanine + ADP + phosphate + H(+). It functions in the pathway cell wall biogenesis; peptidoglycan biosynthesis. Functionally, cell wall formation. The protein is D-alanine--D-alanine ligase of Novosphingobium aromaticivorans (strain ATCC 700278 / DSM 12444 / CCUG 56034 / CIP 105152 / NBRC 16084 / F199).